Here is a 780-residue protein sequence, read N- to C-terminus: Pumilio domain-containing protein C4G8.03c (780 aa).

Disordered stretches follow at residues 1-29, 298-330, and 358-411; these read MVNRDAYNELNLNKKSQETNRKPSPLSSY, LSHFPDHLDPSRIPSPYQPSSLQPLESRKLHSK, and NHHS…GKTV. Residues 298–307 show a composition bias toward basic and acidic residues; the sequence is LSHFPDHLDP. Residues 311–322 show a composition bias toward low complexity; the sequence is PSPYQPSSLQPL. Residues 358–382 show a composition bias toward polar residues; it reads NHHSSLSMDNDPTNVSTKNRNNQTV. The region spanning 435–778 is the PUM-HD domain; sequence EKSDDLSNLL…HILAKLTSST (344 aa). 9 Pumilio repeats span residues 462–497, 498–533, 534–569, 570–606, 607–642, 643–678, 679–714, 715–752, and 753–780; these read GFLGHLSTICKDQYGCRYLQKLLDENPKVNASLFFP, EIRQSVVQLMIDPFGNYMCQKLFVYASREQKLSMLN, GIGEGIVDICSNLYGTRSMQNIIDKLTSNEQISLLL, KIIIPSLTTLACDNNGTHVLQKCIAKFPPEKLEPLFL, SMEENLITLATNRHGCCILQRCLDRTNGDIQERLVN, SIIKSCLLLVQNAYGNYLVQHVLELNIQPYTERIIE, KFFGNICKLSLQKFSSNAIEQCIRTASPSTREQMLQ, EFLSFPNIEQLLDDCYANYVMQRFLNVADESQKFLILR, and SISHVIPKIQNTRHGRHILAKLTSSTSS.

The sequence is that of Pumilio domain-containing protein C4G8.03c from Schizosaccharomyces pombe (strain 972 / ATCC 24843) (Fission yeast).